The sequence spans 500 residues: MVLFHSQASCSKRVKADAIVLPFWKVKSKPKCAASIAKEYESLYRVALDSFSGERGEVEFIYNSGQGKEKRLLILGLGKNEELTSQDVLEVYAKVTRTLRKAKCTTVNVVLPTISELRIPVEDFLTNLTSGILSLNYNYPKYTKEAKKTDPLLTKVTVLGIVPKIADRIFRKEESIFEGVYLTRDLVNGNADEVTPEKLANIAKGLAKQFPSVDAKVLNKDAILKEKMGLLAAVAKGSAVDPRFIVLSYQGKPKSKDHTVLIGKGVTFDSGGLDLKPGKAMLTMKEDMAGAATVLGILSGVAALELPVNVTALIPATENAIDAASYKMGDVYVGMSGLSVEIGSTDAEGRLILADAITYALKYCKPTRIIDFATLTGAMVVSLGEDVAGFFSNNDVLAQDLFEASAETSESLWRLPLVEKYDKALHSDIADMKNIGSNRAGAITAALFLKRFLEDQPVAWAHLDIAGTAYREKDEDAYPKYASGFGVRCLIYYIEKFLSK.

2 residues coordinate Mn(2+): Lys264 and Asp269. The active site involves Lys276. Residues Asp287, Asp346, and Glu348 each coordinate Mn(2+). Arg350 is a catalytic residue.

The protein belongs to the peptidase M17 family. The cofactor is Mn(2+).

It is found in the cytoplasm. The enzyme catalyses Release of an N-terminal amino acid, Xaa-|-Yaa-, in which Xaa is preferably Leu, but may be other amino acids including Pro although not Arg or Lys, and Yaa may be Pro. Amino acid amides and methyl esters are also readily hydrolyzed, but rates on arylamides are exceedingly low.. It catalyses the reaction Release of an N-terminal amino acid, preferentially leucine, but not glutamic or aspartic acids.. In terms of biological role, presumably involved in the processing and regular turnover of intracellular proteins. Catalyzes the removal of unsubstituted N-terminal amino acids from various peptides. The chain is Probable cytosol aminopeptidase from Chlamydia abortus (strain DSM 27085 / S26/3) (Chlamydophila abortus).